Reading from the N-terminus, the 103-residue chain is N(4)-acetylcytidine amidohydrolase (103 aa).

Residues 6–100 enclose the ASCH domain; it reads ITFFQRFQND…NQMQFYVIDF (95 aa). K21 (proton acceptor) is an active-site residue. The active-site Nucleophile is the T24. E74 serves as the catalytic Proton donor.

This sequence belongs to the N(4)-acetylcytidine amidohydrolase family.

The enzyme catalyses N(4)-acetylcytidine + H2O = cytidine + acetate + H(+). The catalysed reaction is N(4)-acetyl-2'-deoxycytidine + H2O = 2'-deoxycytidine + acetate + H(+). It carries out the reaction N(4)-acetylcytosine + H2O = cytosine + acetate + H(+). Catalyzes the hydrolysis of N(4)-acetylcytidine (ac4C). The polypeptide is N(4)-acetylcytidine amidohydrolase (yqfB) (Salmonella arizonae (strain ATCC BAA-731 / CDC346-86 / RSK2980)).